Consider the following 147-residue polypeptide: uncharacterized protein (147 aa).

It belongs to the limonene-1,2-epoxide hydrolase family.

This is an uncharacterized protein from Bacillus subtilis (strain 168).